Here is a 212-residue protein sequence, read N- to C-terminus: Probable nicotinate-nucleotide adenylyltransferase (212 aa).

The protein belongs to the NadD family.

It carries out the reaction nicotinate beta-D-ribonucleotide + ATP + H(+) = deamido-NAD(+) + diphosphate. It participates in cofactor biosynthesis; NAD(+) biosynthesis; deamido-NAD(+) from nicotinate D-ribonucleotide: step 1/1. Its function is as follows. Catalyzes the reversible adenylation of nicotinate mononucleotide (NaMN) to nicotinic acid adenine dinucleotide (NaAD). This Saccharopolyspora erythraea (strain ATCC 11635 / DSM 40517 / JCM 4748 / NBRC 13426 / NCIMB 8594 / NRRL 2338) protein is Probable nicotinate-nucleotide adenylyltransferase.